Reading from the N-terminus, the 443-residue chain is Maintenance of mitochondrial morphology protein 1 (443 aa).

Residues 1–80 lie on the Lumenal side of the membrane; that stretch reads MADLETSDLS…PSNTWSFTQG (80 aa). Residues 81 to 101 form a helical membrane-spanning segment; the sequence is LIVGQLSVVFVIVIFIKFFVF. The Cytoplasmic portion of the chain corresponds to 102–443; the sequence is AESSPALAKS…NGDKVEDGSN (342 aa). 2 disordered regions span residues 126–146 and 304–358; these read KKDQ…TTAS and LSAH…NDGT. Over residues 131-142 the composition is skewed to acidic residues; it reads SSDDADPDDDSE. The SMP-LTD domain occupies 165–417; sequence SPESLDWFNV…EPRFQVVRLP (253 aa).

Belongs to the MMM1 family. Homodimer. Component of the ER-mitochondria encounter structure (ERMES) or MDM complex, composed of MMM1, MDM10, MDM12 and MDM34. An MMM1 homodimer associates with one molecule of MDM12 on each side in a pairwise head-to-tail manner, and the SMP-LTD domains of MMM1 and MDM12 generate a continuous hydrophobic tunnel for phospholipid trafficking.

Its subcellular location is the endoplasmic reticulum membrane. In terms of biological role, component of the ERMES/MDM complex, which serves as a molecular tether to connect the endoplasmic reticulum (ER) and mitochondria. Components of this complex are involved in the control of mitochondrial shape and protein biogenesis, and function in nonvesicular lipid trafficking between the ER and mitochondria. The MDM12-MMM1 subcomplex functions in the major beta-barrel assembly pathway that is responsible for biogenesis of all outer membrane beta-barrel proteins, and acts in a late step after the SAM complex. The MDM10-MDM12-MMM1 subcomplex further acts in the TOM40-specific pathway after the action of the MDM12-MMM1 complex. Essential for establishing and maintaining the structure of mitochondria and maintenance of mtDNA nucleoids. This is Maintenance of mitochondrial morphology protein 1 from Scheffersomyces stipitis (strain ATCC 58785 / CBS 6054 / NBRC 10063 / NRRL Y-11545) (Yeast).